Consider the following 187-residue polypeptide: Elongation factor P (187 aa).

The protein belongs to the elongation factor P family.

Its subcellular location is the cytoplasm. It functions in the pathway protein biosynthesis; polypeptide chain elongation. Its function is as follows. Involved in peptide bond synthesis. Stimulates efficient translation and peptide-bond synthesis on native or reconstituted 70S ribosomes in vitro. Probably functions indirectly by altering the affinity of the ribosome for aminoacyl-tRNA, thus increasing their reactivity as acceptors for peptidyl transferase. The polypeptide is Elongation factor P (Rhodococcus jostii (strain RHA1)).